A 157-amino-acid polypeptide reads, in one-letter code: AP-1 complex subunit sigma-2 (157 aa).

Belongs to the adaptor complexes small subunit family. Adaptor protein complex 1 (AP-1) is a heterotetramer composed of two large adaptins (gamma-type subunit AP1G1 and beta-type subunit AP1B1), a medium adaptin (mu-type subunit AP1M1 or AP1M2) and a small adaptin (sigma-type subunit AP1S1 or AP1S2 or AP1S3). Binds to MUC1. As to expression, widely expressed.

It localises to the golgi apparatus. The protein resides in the cytoplasmic vesicle membrane. The protein localises to the membrane. Its subcellular location is the clathrin-coated pit. Subunit of clathrin-associated adaptor protein complex 1 that plays a role in protein sorting in the late-Golgi/trans-Golgi network (TGN) and/or endosomes. The AP complexes mediate both the recruitment of clathrin to membranes and the recognition of sorting signals within the cytosolic tails of transmembrane cargo molecules. The polypeptide is AP-1 complex subunit sigma-2 (AP1S2) (Homo sapiens (Human)).